A 500-amino-acid chain; its full sequence is Probable trehalose-phosphate phosphatase 8 (500 aa).

Belongs to the trehalose phosphatase family. Requires a divalent metal cation as cofactor.

The enzyme catalyses alpha,alpha-trehalose 6-phosphate + H2O = alpha,alpha-trehalose + phosphate. The protein operates within glycan biosynthesis; trehalose biosynthesis. Its function is as follows. Removes the phosphate from trehalose 6-phosphate to produce free trehalose. Trehalose accumulation in plant may improve abiotic stress tolerance. This Oryza sativa subsp. japonica (Rice) protein is Probable trehalose-phosphate phosphatase 8 (TPP8).